Consider the following 316-residue polypeptide: Acetaldehyde dehydrogenase (316 aa).

11-14 is a binding site for NAD(+); it reads SGNI. Catalysis depends on C131, which acts as the Acyl-thioester intermediate. Residues 162–170 and N289 contribute to the NAD(+) site; that span reads SAGPGTRAN.

Belongs to the acetaldehyde dehydrogenase family. Interacts with MhpE.

It catalyses the reaction acetaldehyde + NAD(+) + CoA = acetyl-CoA + NADH + H(+). Its pathway is aromatic compound metabolism; 3-phenylpropanoate degradation. In terms of biological role, catalyzes the conversion of acetaldehyde to acetyl-CoA, using NAD(+) and coenzyme A. Is the final enzyme in the meta-cleavage pathway for the degradation of aromatic compounds. This is Acetaldehyde dehydrogenase from Escherichia coli O7:K1 (strain IAI39 / ExPEC).